The primary structure comprises 377 residues: Nucleosome assembly protein 1;3 (377 aa).

Residues 26–80 (VNVLKNKLQGLTGKHSNVLENLSPNVRKRVEVLREIQTQHDELEAKFFEERAALE) adopt a coiled-coil conformation. Positions 47 to 62 (LSPNVRKRVEVLREIQ) match the Nuclear export signal motif. Positions 223–228 (KKKPKK) match the Nuclear localization signal motif. A disordered region spans residues 298–377 (EAAQDEDYID…GERPPECKQQ (80 aa)). Acidic residues predominate over residues 300 to 341 (AQDEDYIDLEDDEDEEDDEDEDEDEEDEEEEDEDEDDDDEDE). Residues 345–357 (KTKKKSSAGRKRS) show a composition bias toward basic residues. Cys-374 is modified (cysteine methyl ester). Cys-374 carries S-farnesyl cysteine lipidation. The propeptide at 375–377 (KQQ) is removed in mature form.

This sequence belongs to the nucleosome assembly protein (NAP) family. In terms of assembly, can form homomeric and heteromeric protein complexes with NAP1;4. Binds histones H2A and H2B in vivo. Also able to bind histones H1 and H4 in vitro. Interacts with CYCB1;1 and with alpha tubulin.

The protein resides in the nucleus. The protein localises to the cytoplasm. Functionally, may modulate chromatin structure by regulation of nucleosome assembly/disassembly. Could function together with B-type cyclins in the regulation of microtubule dynamics. In Nicotiana tabacum (Common tobacco), this protein is Nucleosome assembly protein 1;3 (NAP1;3).